The following is a 205-amino-acid chain: ATP phosphoribosyltransferase (205 aa).

It belongs to the ATP phosphoribosyltransferase family. Short subfamily. In terms of assembly, heteromultimer composed of HisG and HisZ subunits.

The protein localises to the cytoplasm. The catalysed reaction is 1-(5-phospho-beta-D-ribosyl)-ATP + diphosphate = 5-phospho-alpha-D-ribose 1-diphosphate + ATP. Its pathway is amino-acid biosynthesis; L-histidine biosynthesis; L-histidine from 5-phospho-alpha-D-ribose 1-diphosphate: step 1/9. In terms of biological role, catalyzes the condensation of ATP and 5-phosphoribose 1-diphosphate to form N'-(5'-phosphoribosyl)-ATP (PR-ATP). Has a crucial role in the pathway because the rate of histidine biosynthesis seems to be controlled primarily by regulation of HisG enzymatic activity. In Vesicomyosocius okutanii subsp. Calyptogena okutanii (strain HA), this protein is ATP phosphoribosyltransferase.